A 79-amino-acid chain; its full sequence is UPF0175 protein APE_0890a.1 (79 aa).

It belongs to the UPF0175 family.

In Aeropyrum pernix (strain ATCC 700893 / DSM 11879 / JCM 9820 / NBRC 100138 / K1), this protein is UPF0175 protein APE_0890a.1.